A 335-amino-acid polypeptide reads, in one-letter code: DNA-directed RNA polymerase subunit alpha (335 aa).

Residues 1 to 233 (MVREKIRVST…DLLIPFLHAE (233 aa)) form an alpha N-terminal domain (alpha-NTD) region. Residues 263–335 (KKKIALKFIF…HFVIDLKNKR (73 aa)) form an alpha C-terminal domain (alpha-CTD) region.

Belongs to the RNA polymerase alpha chain family. In plastids the minimal PEP RNA polymerase catalytic core is composed of four subunits: alpha, beta, beta', and beta''. When a (nuclear-encoded) sigma factor is associated with the core the holoenzyme is formed, which can initiate transcription.

The protein resides in the plastid. It is found in the chloroplast. It catalyses the reaction RNA(n) + a ribonucleoside 5'-triphosphate = RNA(n+1) + diphosphate. In terms of biological role, DNA-dependent RNA polymerase catalyzes the transcription of DNA into RNA using the four ribonucleoside triphosphates as substrates. In Spinacia oleracea (Spinach), this protein is DNA-directed RNA polymerase subunit alpha.